Consider the following 190-residue polypeptide: Imidazoleglycerol-phosphate dehydratase (190 aa).

It belongs to the imidazoleglycerol-phosphate dehydratase family.

It is found in the cytoplasm. It catalyses the reaction D-erythro-1-(imidazol-4-yl)glycerol 3-phosphate = 3-(imidazol-4-yl)-2-oxopropyl phosphate + H2O. It functions in the pathway amino-acid biosynthesis; L-histidine biosynthesis; L-histidine from 5-phospho-alpha-D-ribose 1-diphosphate: step 6/9. This is Imidazoleglycerol-phosphate dehydratase from Methanococcus maripaludis (strain DSM 14266 / JCM 13030 / NBRC 101832 / S2 / LL).